Reading from the N-terminus, the 253-residue chain is 3-deoxy-manno-octulosonate cytidylyltransferase (253 aa).

The protein belongs to the KdsB family.

Its subcellular location is the cytoplasm. The enzyme catalyses 3-deoxy-alpha-D-manno-oct-2-ulosonate + CTP = CMP-3-deoxy-beta-D-manno-octulosonate + diphosphate. It functions in the pathway nucleotide-sugar biosynthesis; CMP-3-deoxy-D-manno-octulosonate biosynthesis; CMP-3-deoxy-D-manno-octulosonate from 3-deoxy-D-manno-octulosonate and CTP: step 1/1. The protein operates within bacterial outer membrane biogenesis; lipopolysaccharide biosynthesis. Activates KDO (a required 8-carbon sugar) for incorporation into bacterial lipopolysaccharide in Gram-negative bacteria. The chain is 3-deoxy-manno-octulosonate cytidylyltransferase from Acinetobacter baumannii (strain AYE).